We begin with the raw amino-acid sequence, 654 residues long: U-box domain-containing protein 12 (654 aa).

In terms of domain architecture, U-box spans 255-329; it reads IPPEEFRCPI…AQWCESNGIE (75 aa). The disordered stretch occupies residues 329-352; sequence EPPKRPNISQPSSKASSSSSAPDD. The span at 337–349 shows a compositional bias: low complexity; sequence SQPSSKASSSSSA. 5 ARM repeats span residues 387-427, 430-469, 471-510, 512-551, and 553-592; these read NHNR…NLSI, ENKG…SLSV, DENK…NLCI, QGNK…ILSS, and PDGK…HLCS.

The enzyme catalyses S-ubiquitinyl-[E2 ubiquitin-conjugating enzyme]-L-cysteine + [acceptor protein]-L-lysine = [E2 ubiquitin-conjugating enzyme]-L-cysteine + N(6)-ubiquitinyl-[acceptor protein]-L-lysine.. Its pathway is protein modification; protein ubiquitination. Functionally, functions as an E3 ubiquitin ligase. The protein is U-box domain-containing protein 12 (PUB12) of Arabidopsis thaliana (Mouse-ear cress).